Reading from the N-terminus, the 196-residue chain is dITP/XTP pyrophosphatase (196 aa).

7–12 (TGNAGK) contacts substrate. Positions 39 and 68 each coordinate Mg(2+). Asp68 functions as the Proton acceptor in the catalytic mechanism. Residues Ser69, 153 to 156 (HGYD), Lys176, and 181 to 182 (HR) contribute to the substrate site.

Belongs to the HAM1 NTPase family. As to quaternary structure, homodimer. Requires Mg(2+) as cofactor.

It catalyses the reaction XTP + H2O = XMP + diphosphate + H(+). The enzyme catalyses dITP + H2O = dIMP + diphosphate + H(+). It carries out the reaction ITP + H2O = IMP + diphosphate + H(+). Functionally, pyrophosphatase that catalyzes the hydrolysis of nucleoside triphosphates to their monophosphate derivatives, with a high preference for the non-canonical purine nucleotides XTP (xanthosine triphosphate), dITP (deoxyinosine triphosphate) and ITP. Seems to function as a house-cleaning enzyme that removes non-canonical purine nucleotides from the nucleotide pool, thus preventing their incorporation into DNA/RNA and avoiding chromosomal lesions. This is dITP/XTP pyrophosphatase from Thioalkalivibrio sulfidiphilus (strain HL-EbGR7).